Here is a 316-residue protein sequence, read N- to C-terminus: Phospholipase A1 3 (316 aa).

Residues 1-4 (ADDL) form the signal peptide. The propeptide occupies 5–14 (TTLRNGTLDR). An intrachain disulfide couples Cys20 to Cys103. Residue Ser153 is the Nucleophile of the active site. Asp181 functions as the Charge relay system in the catalytic mechanism. 2 disulfides stabilise this stretch: Cys192/Cys197 and Cys235/Cys240. The active-site Charge relay system is His242. 3 disulfide bridges follow: Cys257–Cys284, Cys258–Cys309, and Cys277–Cys282.

Belongs to the AB hydrolase superfamily. Lipase family. Expressed by the venom gland.

It localises to the secreted. It carries out the reaction a 1,2-diacyl-sn-glycero-3-phosphocholine + H2O = a 2-acyl-sn-glycero-3-phosphocholine + a fatty acid + H(+). Its function is as follows. Catalyzes the hydrolysis of phosphatidylcholine with phospholipase A1 activity. May act as an allergen and induce hemolytic activity. The sequence is that of Phospholipase A1 3 from Polistes dominula (European paper wasp).